We begin with the raw amino-acid sequence, 275 residues long: Large ribosomal subunit protein uL2c (275 aa).

The segment at 28–53 is disordered; that stretch reads TPTKSLTHANHRARGRNHSGSITTRW.

The protein belongs to the universal ribosomal protein uL2 family. As to quaternary structure, part of the 50S ribosomal subunit.

It is found in the plastid. Its subcellular location is the chloroplast. The protein is Large ribosomal subunit protein uL2c (rpl2) of Nephroselmis olivacea (Green alga).